Reading from the N-terminus, the 514-residue chain is 1-pyrroline-5-carboxylate dehydrogenase (514 aa).

Residues Glu286 and Cys320 contribute to the active site.

It belongs to the aldehyde dehydrogenase family. RocA subfamily.

The enzyme catalyses L-glutamate 5-semialdehyde + NAD(+) + H2O = L-glutamate + NADH + 2 H(+). It functions in the pathway amino-acid degradation; L-proline degradation into L-glutamate; L-glutamate from L-proline: step 2/2. This Staphylococcus haemolyticus (strain JCSC1435) protein is 1-pyrroline-5-carboxylate dehydrogenase.